A 353-amino-acid polypeptide reads, in one-letter code: Trans-enoyl reductase eqxC (353 aa).

NADP(+) is bound at residue 45–48 (VDTK). 131–138 (ISFMTTGL) lines the substrate pocket. Residues 166–169 (SSAT), 189–192 (SPRN), Y207, and 254–255 (LE) each bind NADP(+). Residue 275–279 (GPQML) coordinates substrate. 344–345 (IS) is an NADP(+) binding site.

The protein belongs to the zinc-containing alcohol dehydrogenase family. As to quaternary structure, monomer.

The catalysed reaction is L-serine + 7 malonyl-CoA + acetyl-CoA + 2 S-adenosyl-L-methionine + ATP + 8 NADPH + 11 H(+) = (5S)-3-[(2E,6R,8E,10E,12E)-2,6-dimethyltetradeca-2,8,10,12-tetraenoyl]-5-(hydroxymethyl)pyrrolidine-2,4-dione + AMP + 2 S-adenosyl-L-homocysteine + 7 CO2 + diphosphate + 8 NADP(+) + 8 CoA + 6 H2O. The protein operates within mycotoxin biosynthesis. Its function is as follows. Trans-enoyl reductase; part of the gene cluster that mediates the biosynthesis of equisetin, a trans-fused decalin-containing tetramic acid with antimicrobial activity. The PKS module of eqxS together with the enoylreductase eqxC catalyze the formation of the polyketide unit which is then conjugated to L-serine by the condensation domain of the eqxS NRPS module. Activity of the Dieckmann cyclase domain (RED) results in release of the Dieckmann product intermediate. Diels-Alderase eqx3 is involved in endo-selective Diels-Alder cycloaddition to form the decalin ring, leading to the production of N-desmethylequisetin also called trichosetin. Subsequent N-methylation is carried out by eqxD to give equisetin. The polypeptide is Trans-enoyl reductase eqxC (Fusarium heterosporum).